Consider the following 509-residue polypeptide: Kynureninase 1 (509 aa).

Pyridoxal 5'-phosphate-binding positions include Leu169, Thr170, 197–200 (FPSD), Asp283, His286, and Tyr308. Lys309 is subject to N6-(pyridoxal phosphate)lysine. The pyridoxal 5'-phosphate site is built by Trp349 and Asn377.

The protein belongs to the kynureninase family. In terms of assembly, homodimer. Pyridoxal 5'-phosphate serves as cofactor.

The protein resides in the cytoplasm. The catalysed reaction is L-kynurenine + H2O = anthranilate + L-alanine + H(+). The enzyme catalyses 3-hydroxy-L-kynurenine + H2O = 3-hydroxyanthranilate + L-alanine + H(+). The protein operates within amino-acid degradation; L-kynurenine degradation; L-alanine and anthranilate from L-kynurenine: step 1/1. It functions in the pathway cofactor biosynthesis; NAD(+) biosynthesis; quinolinate from L-kynurenine: step 2/3. Catalyzes the cleavage of L-kynurenine (L-Kyn) and L-3-hydroxykynurenine (L-3OHKyn) into anthranilic acid (AA) and 3-hydroxyanthranilic acid (3-OHAA), respectively. The polypeptide is Kynureninase 1 (bna5-1) (Aspergillus fumigatus (strain CBS 144.89 / FGSC A1163 / CEA10) (Neosartorya fumigata)).